The primary structure comprises 286 residues: ATP synthase gamma chain (286 aa).

Belongs to the ATPase gamma chain family. In terms of assembly, F-type ATPases have 2 components, CF(1) - the catalytic core - and CF(0) - the membrane proton channel. CF(1) has five subunits: alpha(3), beta(3), gamma(1), delta(1), epsilon(1). CF(0) has three main subunits: a, b and c.

The protein resides in the cell inner membrane. In terms of biological role, produces ATP from ADP in the presence of a proton gradient across the membrane. The gamma chain is believed to be important in regulating ATPase activity and the flow of protons through the CF(0) complex. The chain is ATP synthase gamma chain from Flavobacterium johnsoniae (strain ATCC 17061 / DSM 2064 / JCM 8514 / BCRC 14874 / CCUG 350202 / NBRC 14942 / NCIMB 11054 / UW101) (Cytophaga johnsonae).